Here is a 117-residue protein sequence, read N- to C-terminus: Transcription elongation factor A protein-like 8 (117 aa).

Basic and acidic residues-rich tracts occupy residues Met1 to Leu24 and Tyr61 to Glu74. A disordered region spans residues Met1 to Glu74. Residues Glu73–His100 adopt a coiled-coil conformation.

This sequence belongs to the TFS-II family. TFA subfamily.

Its subcellular location is the nucleus. May be involved in transcriptional regulation. This chain is Transcription elongation factor A protein-like 8 (TCEAL8), found in Bos taurus (Bovine).